The primary structure comprises 961 residues: Mitogen-activated protein kinase kinase kinase 13-B (961 aa).

The segment at 89-115 is disordered; that stretch reads RDQDEPENTAPQGSSHSGDGGNNSANE. Positions 101-114 are enriched in low complexity; that stretch reads GSSHSGDGGNNSAN. The Protein kinase domain occupies 171-412; it reads ISELQWLGSG…FRQILMHLDI (242 aa). ATP-binding positions include 177–185 and Lys198; that span reads LGSGAQGAV. Catalysis depends on Asp282, which acts as the Proton acceptor. Leucine-zipper stretches follow at residues 436–457 and 489–510; these read VKKH…DEEL and LSSI…EQTV. Residues 460–497 are a coiled coil; sequence RRREELRHALDIREHYERKLERANNLYMELSSIMLQLE. Disordered stretches follow at residues 507-644, 796-874, and 933-961; these read EQTV…ETSQ, TPPA…DVAC, and NAES…SSTW. The segment covering 563–580 has biased composition (low complexity); the sequence is AEGSAASASPISGSPKTS. A compositionally biased stretch (basic residues) spans 586–598; it reads GRYRSKPRHRRGN. The segment covering 613–628 has biased composition (low complexity); sequence QESPAPSQQSSQHQTP. Over residues 813–826 the composition is skewed to acidic residues; that stretch reads DSSEGEEGEVDSEV. The interval 814–827 is acidic; sequence SSEGEEGEVDSEVE. The segment covering 839–854 has biased composition (polar residues); sequence STCQSYSTFSSENFSV. The segment covering 934–945 has biased composition (acidic residues); the sequence is AESDCDSSEGEC. Positions 949–961 are enriched in polar residues; sequence TVRTNNPVNSSTW.

It belongs to the protein kinase superfamily. Ser/Thr protein kinase family.

The protein resides in the cytoplasm. It localises to the membrane. It catalyses the reaction L-seryl-[protein] + ATP = O-phospho-L-seryl-[protein] + ADP + H(+). The catalysed reaction is L-threonyl-[protein] + ATP = O-phospho-L-threonyl-[protein] + ADP + H(+). In terms of biological role, may have a role in the JNK signaling pathway. This Xenopus laevis (African clawed frog) protein is Mitogen-activated protein kinase kinase kinase 13-B (map3k13-b).